Reading from the N-terminus, the 120-residue chain is Chaperonin GroEL (120 aa).

23–27 (DGTTT) lines the ATP pocket.

It belongs to the chaperonin (HSP60) family. Forms a cylinder of 14 subunits composed of two heptameric rings stacked back-to-back. Interacts with the co-chaperonin GroES.

Its subcellular location is the cytoplasm. The enzyme catalyses ATP + H2O + a folded polypeptide = ADP + phosphate + an unfolded polypeptide.. In terms of biological role, together with its co-chaperonin GroES, plays an essential role in assisting protein folding. The GroEL-GroES system forms a nano-cage that allows encapsulation of the non-native substrate proteins and provides a physical environment optimized to promote and accelerate protein folding. The protein is Chaperonin GroEL of Mycolicibacter nonchromogenicus (Mycobacterium nonchromogenicum).